Consider the following 114-residue polypeptide: Large ribosomal subunit protein bL19 (114 aa).

Belongs to the bacterial ribosomal protein bL19 family.

Functionally, this protein is located at the 30S-50S ribosomal subunit interface and may play a role in the structure and function of the aminoacyl-tRNA binding site. The polypeptide is Large ribosomal subunit protein bL19 (Clostridium botulinum (strain ATCC 19397 / Type A)).